The following is a 380-amino-acid chain: Cytochrome b (380 aa).

The next 4 helical transmembrane spans lie at 33–53 (FGSLLGLCLATQILTGLFLAM), 77–98 (WLIRNIHANGASFFFICIYMHI), 113–133 (WNIGVVLLLLTMMTAFVGYVL), and 178–198 (FFAFHFLFPFVIAAATVLHLL). The heme b site is built by His-83 and His-97. Positions 182 and 196 each coordinate heme b. His-201 is an a ubiquinone binding site. A run of 4 helical transmembrane segments spans residues 226–246 (YKDLLGFVAMLLGLTSLALFA), 288–308 (LGGVLALLFSILVLMVVPILH), 320–340 (LTQFLFWTLVADMLILTWIGG), and 347–367 (FIIIGQVASVIYFTIFLVLAP).

The protein belongs to the cytochrome b family. As to quaternary structure, the cytochrome bc1 complex contains 3 respiratory subunits (MT-CYB, CYC1 and UQCRFS1), 2 core proteins (UQCRC1 and UQCRC2) and probably 6 low-molecular weight proteins. Requires heme b as cofactor.

It is found in the mitochondrion inner membrane. Functionally, component of the ubiquinol-cytochrome c reductase complex (complex III or cytochrome b-c1 complex) that is part of the mitochondrial respiratory chain. The b-c1 complex mediates electron transfer from ubiquinol to cytochrome c. Contributes to the generation of a proton gradient across the mitochondrial membrane that is then used for ATP synthesis. The polypeptide is Cytochrome b (mt-cyb) (Salmo trutta (Brown trout)).